The chain runs to 331 residues: Coiled-coil domain-containing protein 92 (331 aa).

Coiled coils occupy residues 18–44 (MAATNLENQLHSAQKNLLFLQREHAST) and 76–152 (DGTS…EQRA). Positions 171–184 (SSSGTSDASPSGSP) are enriched in low complexity. Residues 171 to 212 (SSSGTSDASPSGSPVLASYKPAPPKDKLPETPRRRMKKSLSA) are disordered. Residues 193–203 (PPKDKLPETPR) are compositionally biased toward basic and acidic residues. Ser-209 carries the phosphoserine modification.

In terms of assembly, interacts with CEP164. (Microbial infection) Interacts with ebolavirus protein NP; this interaction sequesters NP in the cytoplasm. In terms of processing, phosphorylated at Ser-209 by TTBK2.

It is found in the cytoplasm. The protein resides in the cytoskeleton. Its subcellular location is the microtubule organizing center. It localises to the centrosome. The protein localises to the centriole. Interferon-stimulated protein that plays a role in innate immunity. Strongly inhibits ebolavirus transcription and replication. Forms a complex with viral RNA-bound nucleocapsid NP and thereby prevents the transport of NP to the cell surface. The polypeptide is Coiled-coil domain-containing protein 92 (CCDC92) (Homo sapiens (Human)).